Reading from the N-terminus, the 197-residue chain is Putative methyltransferase Mtx subunit A (197 aa).

This sequence belongs to the MtrA family. As to quaternary structure, may be part of a complex composed of 3 subunits; MtxA, MtxH and MtxX.

The polypeptide is Putative methyltransferase Mtx subunit A (mtxA) (Methanosarcina acetivorans (strain ATCC 35395 / DSM 2834 / JCM 12185 / C2A)).